Reading from the N-terminus, the 243-residue chain is Ribosomal RNA small subunit methyltransferase J (243 aa).

Residues 112–113 and aspartate 164 contribute to the S-adenosyl-L-methionine site; that span reads ER.

The protein belongs to the methyltransferase superfamily. RsmJ family.

Its subcellular location is the cytoplasm. The catalysed reaction is guanosine(1516) in 16S rRNA + S-adenosyl-L-methionine = N(2)-methylguanosine(1516) in 16S rRNA + S-adenosyl-L-homocysteine + H(+). Specifically methylates the guanosine in position 1516 of 16S rRNA. The sequence is that of Ribosomal RNA small subunit methyltransferase J from Legionella pneumophila subsp. pneumophila (strain Philadelphia 1 / ATCC 33152 / DSM 7513).